The chain runs to 227 residues: Ribonuclease HII (227 aa).

Residues 1–210 (MKLAGIDEAG…LKKIEEKLAK (210 aa)) enclose the RNase H type-2 domain. 3 residues coordinate a divalent metal cation: Asp7, Glu8, and Asp105.

Belongs to the RNase HII family. Requires Mn(2+) as cofactor. It depends on Mg(2+) as a cofactor.

It is found in the cytoplasm. It catalyses the reaction Endonucleolytic cleavage to 5'-phosphomonoester.. Endonuclease that specifically degrades the RNA of RNA-DNA hybrids. This Thermococcus onnurineus (strain NA1) protein is Ribonuclease HII.